We begin with the raw amino-acid sequence, 197 residues long: TM2 domain-containing protein 1 (197 aa).

The N-terminal stretch at 1–32 is a signal peptide; the sequence is MAFRWRSLMRFRSTTRLLLLFTFCLTVIHSLG. Over 33-105 the chain is Extracellular; it reads NDVDSCDKLH…GFNKTIPCRN (73 aa). Residues Asn77, Asn84, Asn98, and Asn105 are each glycosylated (N-linked (GlcNAc...) asparagine). Residues 106-126 form a helical membrane-spanning segment; the sequence is VSGYSYKVAVALSLFLGWIGA. Positions 108–155 constitute a TM2 domain; sequence GYSYKVAVALSLFLGWIGADRFYLGYPALGLLKFCTVGFCGIGSLVDF. The Cytoplasmic portion of the chain corresponds to 127-143; the sequence is DRFYLGYPALGLLKFCT. The helical transmembrane segment at 144-164 threads the bilayer; that stretch reads VGFCGIGSLVDFMLISMQIVG. At 165–197 the chain is on the extracellular side; that stretch reads PSDGSDYIVDYYGARLTRLSITNETYRRMQPSP. Residue Asn187 is glycosylated (N-linked (GlcNAc...) asparagine).

It belongs to the TM2 family.

It is found in the membrane. This chain is TM2 domain-containing protein 1 (tm2d1), found in Danio rerio (Zebrafish).